Consider the following 283-residue polypeptide: Protein/nucleic acid deglycase HchA (283 aa).

3 residues coordinate Zn(2+): His-86, Glu-91, and His-123. Cys-185 serves as the catalytic Nucleophile.

The protein belongs to the peptidase C56 family. HchA subfamily. As to quaternary structure, homodimer.

It is found in the cytoplasm. It carries out the reaction N(omega)-(1-hydroxy-2-oxopropyl)-L-arginyl-[protein] + H2O = lactate + L-arginyl-[protein] + H(+). The enzyme catalyses N(6)-(1-hydroxy-2-oxopropyl)-L-lysyl-[protein] + H2O = lactate + L-lysyl-[protein] + H(+). It catalyses the reaction S-(1-hydroxy-2-oxopropyl)-L-cysteinyl-[protein] + H2O = lactate + L-cysteinyl-[protein] + H(+). The catalysed reaction is N(omega)-(1-hydroxy-2-oxoethyl)-L-arginyl-[protein] + H2O = L-arginyl-[protein] + glycolate + H(+). It carries out the reaction N(6)-(1-hydroxy-2-oxoethyl)-L-lysyl-[protein] + H2O = glycolate + L-lysyl-[protein] + H(+). The enzyme catalyses S-(1-hydroxy-2-oxoethyl)-L-cysteinyl-[protein] + H2O = glycolate + L-cysteinyl-[protein] + H(+). It catalyses the reaction N(2)-(1-hydroxy-2-oxopropyl)-dGTP + H2O = lactate + dGTP + H(+). The catalysed reaction is N(2)-(1-hydroxy-2-oxopropyl)-GTP + H2O = lactate + GTP + H(+). It carries out the reaction N(2)-(1-hydroxy-2-oxopropyl)-GDP + H2O = lactate + GDP + H(+). The enzyme catalyses N(2)-(1-hydroxy-2-oxopropyl)-GMP + H2O = lactate + GMP + H(+). It catalyses the reaction N(2)-(1-hydroxy-2-oxoethyl)-dGTP + H2O = dGTP + glycolate + H(+). The catalysed reaction is N(2)-(1-hydroxy-2-oxoethyl)-GTP + H2O = glycolate + GTP + H(+). It carries out the reaction N(2)-(1-hydroxy-2-oxoethyl)-GDP + H2O = glycolate + GDP + H(+). The enzyme catalyses N(2)-(1-hydroxy-2-oxoethyl)-GMP + H2O = glycolate + GMP + H(+). It catalyses the reaction an N(2)-(1-hydroxy-2-oxopropyl)-guanosine in RNA + H2O = a guanosine in RNA + lactate + H(+). The catalysed reaction is an N(2)-(1-hydroxy-2-oxopropyl)-2'-deoxyguanosine in DNA + H2O = a 2'-deoxyguanosine in DNA + lactate + H(+). It carries out the reaction an N(2)-(1-hydroxy-2-oxoethyl)-guanosine in RNA + H2O = a guanosine in RNA + glycolate + H(+). The enzyme catalyses an N(2)-(1-hydroxy-2-oxoethyl)-2'-deoxyguanosine in DNA + H2O = a 2'-deoxyguanosine in DNA + glycolate + H(+). Protein and nucleotide deglycase that catalyzes the deglycation of the Maillard adducts formed between amino groups of proteins or nucleotides and reactive carbonyl groups of glyoxals. Thus, functions as a protein deglycase that repairs methylglyoxal- and glyoxal-glycated proteins, and releases repaired proteins and lactate or glycolate, respectively. Deglycates cysteine, arginine and lysine residues in proteins, and thus reactivates these proteins by reversing glycation by glyoxals. Acts on early glycation intermediates (hemithioacetals and aminocarbinols), preventing the formation of Schiff bases and advanced glycation endproducts (AGE). Also functions as a nucleotide deglycase able to repair glycated guanine in the free nucleotide pool (GTP, GDP, GMP, dGTP) and in DNA and RNA. Is thus involved in a major nucleotide repair system named guanine glycation repair (GG repair), dedicated to reversing methylglyoxal and glyoxal damage via nucleotide sanitization and direct nucleic acid repair. Plays an important role in protecting cells from carbonyl stress. The protein is Protein/nucleic acid deglycase HchA of Escherichia coli O139:H28 (strain E24377A / ETEC).